The sequence spans 236 residues: uncharacterized protein (236 aa).

It localises to the virion. This is an uncharacterized protein from Acanthamoeba polyphaga (Amoeba).